A 464-amino-acid polypeptide reads, in one-letter code: MVAHRATRRKRASATQLYKTCKLSGTCPEDVVNKIEQKTWADKILQWGSLFTYFGGLGIGTGTGSGGRAGYVPLGSRPSTIVDVTPARPPIVVESVGPTDPSIVTLVEESSVIESGAGIPNFTGSGGFEITSSSTTTPAVLDITPTSSTVHVSSTHITNPLFIDPPVIEAPQTGEVSGNILISTPTSGIHSYEEIPMQTFAVHGSGTEPISSTPIPGFRRIAAPRLYRKAFQQVKVTDPAFLDRPATLVSADNPLFEGTDTSLAFSPSGVAPDPDFMNIVALHRPAFTTRRGGVRFSRLGRKATIQTRRGTQIGARVHYYYDISPIAQAEEIEMQPLLSANNSFDGLYDIYANIDDEAPGLSSQSVATPSAHLPIKPSTLSFASNTTNVTAPLGNVWETPFYSGPDIVLPTGPSTWPFVPQSPYDVTHDVYIQGSSFALWPVYFFRRRRRKRIPYFFADGDVAA.

A Nuclear localization signal motif is present at residues 1-12 (MVAHRATRRKRA). C21 and C27 are disulfide-bonded. Residues 445–453 (FRRRRRKRI) carry the Nuclear localization signal motif.

The protein belongs to the papillomaviridae L2 protein family. Interacts with major capsid protein L1. Interacts with E2; this interaction inhibits E2 transcriptional activity but not the DNA replication function E2. Interacts with host GADD45GIP1. Interacts with host HSPA8; this interaction is required for L2 nuclear translocation. Interacts with host importins KPNB2 and KPNB3. Forms a complex with importin alpha2-beta1 heterodimers via interaction with the importin alpha2 adapter. Interacts with host DYNLT1; this interaction is essential for virus intracellular transport during entry. Interacts (via C-terminus) with host retromer subunits VPS35 and VPS29. Highly phosphorylated.

It is found in the virion. Its subcellular location is the host nucleus. The protein localises to the host early endosome. It localises to the host Golgi apparatus. Minor protein of the capsid that localizes along the inner surface of the virion, within the central cavities beneath the L1 pentamers. Plays a role in capsid stabilization through interaction with the major capsid protein L1. Once the virion enters the host cell, L2 escorts the genomic DNA into the nucleus by promoting escape from the endosomal compartments and traffic through the host Golgi network. Mechanistically, the C-terminus of L2 possesses a cell-penetrating peptide that protudes from the host endosome, interacts with host cytoplasmic retromer cargo and thereby mediates the capsid delivery to the host trans-Golgi network. Plays a role through its interaction with host dynein in the intracellular microtubule-dependent transport of viral capsid toward the nucleus. Mediates the viral genome import into the nucleus through binding to host importins. Once within the nucleus, L2 localizes viral genomes to host PML bodies in order to activate early gene expression for establishment of infection. Later on, promotes late gene expression by interacting with the viral E2 protein and by inhibiting its transcriptional activation functions. During virion assembly, encapsidates the genome by direct interaction with the viral DNA. This chain is Minor capsid protein L2, found in Human papillomavirus 56.